We begin with the raw amino-acid sequence, 358 residues long: Replication-associated protein (358 aa).

The 109-residue stretch at 8–116 (RIQAKNIFLT…DGDTIEWGEF (109 aa)) folds into the CRESS-DNA virus Rep endonuclease domain. Positions 15-18 (FLTY) match the RCR-1 motif. Positions 49, 57, and 59 each coordinate a divalent metal cation. The RCR-2 motif lies at 57 to 59 (HLH). The active-site For DNA cleavage activity is Y103. Positions 103–106 (YVDK) match the RCR-3 motif. D107 is a binding site for a divalent metal cation. Residues 143–153 (LEQALQILKEE) form a binding to RBR1 region. Positions 156 to 176 (KDYFLQHHNLLNNAQKIFQRA) are oligomerization. 222-229 (GDSRTGKT) contributes to the ATP binding site.

It belongs to the geminiviridae Rep protein family. In terms of assembly, homooligomer. Interacts with the replication enhancer protein (REn). Interacts with host retinoblastoma-related protein 1 (RBR1), and may thereby induce the transcription of host replicative enzymes even if the cell is not dividing anymore. Interacts with host PCNA. Interacts with host SCE1 protein. Mg(2+) serves as cofactor. Requires Mn(2+) as cofactor.

It is found in the host nucleus. In terms of biological role, essential for the replication of viral ssDNA. The closed circular ssDNA genome is first converted to a superhelical dsDNA. Rep binds a specific region at the genome origin of replication. It introduces an endonucleolytic nick within the conserved sequence 5'-TAATATTAC-3' in the intergenic region of the genome present in all geminiviruses, thereby initiating the rolling circle replication (RCR). Following cleavage, binds covalently to the 5'-phosphate of DNA as a tyrosyl ester. The cleavage gives rise to a free 3'-OH that serves as a primer for the cellular DNA polymerase. The polymerase synthesizes the (+) strand DNA by rolling circle mechanism. After one round of replication, a Rep-catalyzed nucleotidyl transfer reaction releases a circular single-stranded virus genome, thereby terminating the replication. Displays origin-specific DNA cleavage, nucleotidyl transferase, ATPase and helicase activities. The polypeptide is Replication-associated protein (Beet curly top virus (strain California/Logan) (BCTV)).